The sequence spans 465 residues: A-type ATP synthase subunit B (465 aa).

The protein belongs to the ATPase alpha/beta chains family. Has multiple subunits with at least A(3), B(3), C, D, E, F, H, I and proteolipid K(x).

The protein localises to the cell membrane. Component of the A-type ATP synthase that produces ATP from ADP in the presence of a proton gradient across the membrane. The B chain is a regulatory subunit. The sequence is that of A-type ATP synthase subunit B from Sulfurisphaera tokodaii (strain DSM 16993 / JCM 10545 / NBRC 100140 / 7) (Sulfolobus tokodaii).